Here is an 83-residue protein sequence, read N- to C-terminus: Cytochrome b559 subunit alpha (83 aa).

The chain crosses the membrane as a helical span at residues 21 to 35 (IIHSITIPSLFIAGW). Heme is bound at residue His-23.

The protein belongs to the PsbE/PsbF family. Heterodimer of an alpha subunit and a beta subunit. PSII is composed of 1 copy each of membrane proteins PsbA, PsbB, PsbC, PsbD, PsbE, PsbF, PsbH, PsbI, PsbJ, PsbK, PsbL, PsbM, PsbT, PsbX, PsbY, PsbZ, Psb30/Ycf12, at least 3 peripheral proteins of the oxygen-evolving complex and a large number of cofactors. It forms dimeric complexes. Heme b serves as cofactor.

It localises to the plastid. The protein localises to the chloroplast thylakoid membrane. This b-type cytochrome is tightly associated with the reaction center of photosystem II (PSII). PSII is a light-driven water:plastoquinone oxidoreductase that uses light energy to abstract electrons from H(2)O, generating O(2) and a proton gradient subsequently used for ATP formation. It consists of a core antenna complex that captures photons, and an electron transfer chain that converts photonic excitation into a charge separation. The polypeptide is Cytochrome b559 subunit alpha (Lotus japonicus (Lotus corniculatus var. japonicus)).